Here is a 369-residue protein sequence, read N- to C-terminus: Flagellar P-ring protein (369 aa).

The first 22 residues, M1–A22, serve as a signal peptide directing secretion.

Belongs to the FlgI family. As to quaternary structure, the basal body constitutes a major portion of the flagellar organelle and consists of four rings (L,P,S, and M) mounted on a central rod.

Its subcellular location is the periplasm. It is found in the bacterial flagellum basal body. Assembles around the rod to form the L-ring and probably protects the motor/basal body from shearing forces during rotation. The chain is Flagellar P-ring protein from Pseudomonas savastanoi pv. phaseolicola (strain 1448A / Race 6) (Pseudomonas syringae pv. phaseolicola (strain 1448A / Race 6)).